A 404-amino-acid chain; its full sequence is Deoxyguanosinetriphosphate triphosphohydrolase-like protein (404 aa).

Residues 1–33 form a disordered region; that stretch reads MSVGMAAPRAAFSCDPDRSRGRQFAEPPSSNRS. The region spanning 69 to 217 is the HD domain; the sequence is RLTHSLEVAQ…AALADDIAYD (149 aa).

Belongs to the dGTPase family. Type 2 subfamily.

The sequence is that of Deoxyguanosinetriphosphate triphosphohydrolase-like protein from Rhodopseudomonas palustris (strain HaA2).